The chain runs to 150 residues: Large ribosomal subunit protein bL9 (150 aa).

It belongs to the bacterial ribosomal protein bL9 family.

In terms of biological role, binds to the 23S rRNA. This is Large ribosomal subunit protein bL9 from Methylibium petroleiphilum (strain ATCC BAA-1232 / LMG 22953 / PM1).